The following is a 710-amino-acid chain: Polyribonucleotide nucleotidyltransferase (710 aa).

Positions 501 and 507 each coordinate Mg(2+). Residues 568–628 (PKVQMFQIKP…ETVKQAILFI (61 aa)) enclose the KH domain. Positions 638-710 (NSIYHAHISR…RIDFVLISKK (73 aa)) constitute an S1 motif domain.

It belongs to the polyribonucleotide nucleotidyltransferase family. Mg(2+) is required as a cofactor.

The protein localises to the cytoplasm. It carries out the reaction RNA(n+1) + phosphate = RNA(n) + a ribonucleoside 5'-diphosphate. Involved in mRNA degradation. Catalyzes the phosphorolysis of single-stranded polyribonucleotides processively in the 3'- to 5'-direction. The chain is Polyribonucleotide nucleotidyltransferase from Phytoplasma australiense.